The chain runs to 359 residues: Histidinol-phosphate aminotransferase (359 aa).

The residue at position 217 (Lys217) is an N6-(pyridoxal phosphate)lysine.

The protein belongs to the class-II pyridoxal-phosphate-dependent aminotransferase family. Histidinol-phosphate aminotransferase subfamily. Homodimer. Pyridoxal 5'-phosphate is required as a cofactor.

The enzyme catalyses L-histidinol phosphate + 2-oxoglutarate = 3-(imidazol-4-yl)-2-oxopropyl phosphate + L-glutamate. It functions in the pathway amino-acid biosynthesis; L-histidine biosynthesis; L-histidine from 5-phospho-alpha-D-ribose 1-diphosphate: step 7/9. The polypeptide is Histidinol-phosphate aminotransferase (Citrobacter koseri (strain ATCC BAA-895 / CDC 4225-83 / SGSC4696)).